Reading from the N-terminus, the 315-residue chain is Adenine deaminase (315 aa).

Zn(2+) contacts are provided by histidine 14, histidine 16, and histidine 194. Glutamate 197 serves as the catalytic Proton donor. Residue aspartate 275 participates in Zn(2+) binding. Substrate is bound at residue aspartate 276.

The protein belongs to the metallo-dependent hydrolases superfamily. Adenosine and AMP deaminases family. Adenine deaminase type 2 subfamily. Requires Zn(2+) as cofactor.

The enzyme catalyses adenine + H2O + H(+) = hypoxanthine + NH4(+). In terms of biological role, catalyzes the hydrolytic deamination of adenine to hypoxanthine. Plays an important role in the purine salvage pathway and in nitrogen catabolism. This is Adenine deaminase from Pseudomonas putida (strain GB-1).